Reading from the N-terminus, the 382-residue chain is MAKDDYYELLGVQKGASEEELKKAYRKKAVQYHPDKNPGNKEAEEMFKKISHAYEVLKDPEKRAAYDRYGPAAFEGAGAGAGMGGMRGGGGFHDPFDIFREVFGQQGGMGGGIFEEMFGGGRGGGGQDGADLRYDLEITLEEAARGAEKEISFRKLVACERCDGSGAEPGSKRVTCPTCRGAGQVRRSGGIITFTQTCPTCGGMGTKIEKPCTVCHGEGRVRRTTKLNVRIPPGVDNGSRLRSSGNGEAGVAGGQNGDLYIVISVQEHELFERQGDDLFCEIPIKFTLATLGGTIEVPTLFGKASLKIPVGTQSGTTFRLRDKGMPSLRGGRQGDQLVRVHVEVPQSLTPEQRKILEDFARVSGDASEPTSRSFFEKAKKFF.

Positions 5 to 70 constitute a J domain; the sequence is DYYELLGVQK…EKRAAYDRYG (66 aa). A CR-type zinc finger spans residues 146-224; it reads GAEKEISFRK…CHGEGRVRRT (79 aa). Zn(2+) contacts are provided by Cys-159, Cys-162, Cys-176, Cys-179, Cys-198, Cys-201, Cys-212, and Cys-215. CXXCXGXG motif repeat units lie at residues 159 to 166, 176 to 183, 198 to 205, and 212 to 219; these read CERCDGSG, CPTCRGAG, CPTCGGMG, and CTVCHGEG. Positions 230-250 are disordered; the sequence is RIPPGVDNGSRLRSSGNGEAG.

Belongs to the DnaJ family. As to quaternary structure, homodimer. It depends on Zn(2+) as a cofactor.

The protein resides in the cytoplasm. Participates actively in the response to hyperosmotic and heat shock by preventing the aggregation of stress-denatured proteins and by disaggregating proteins, also in an autonomous, DnaK-independent fashion. Unfolded proteins bind initially to DnaJ; upon interaction with the DnaJ-bound protein, DnaK hydrolyzes its bound ATP, resulting in the formation of a stable complex. GrpE releases ADP from DnaK; ATP binding to DnaK triggers the release of the substrate protein, thus completing the reaction cycle. Several rounds of ATP-dependent interactions between DnaJ, DnaK and GrpE are required for fully efficient folding. Also involved, together with DnaK and GrpE, in the DNA replication of plasmids through activation of initiation proteins. In Opitutus terrae (strain DSM 11246 / JCM 15787 / PB90-1), this protein is Chaperone protein DnaJ.